The chain runs to 291 residues: m-AAA protease-interacting protein 1, mitochondrial (291 aa).

The transit peptide at methionine 1–tyrosine 96 directs the protein to the mitochondrion.

Interacts with AFG3L2. Interacts with SPG7. Interacts with SMDT1/EMRE (via the N-terminal transit peptide); interaction is direct and takes place before maturation of SMDT1/EMRE.

The protein localises to the mitochondrion matrix. In terms of biological role, promotes sorting of SMDT1/EMRE in mitochondria by ensuring its maturation. Interacts with the transit peptide region of SMDT1/EMRE precursor protein in the mitochondrial matrix, leading to protect it against protein degradation by YME1L1, thereby ensuring SMDT1/EMRE maturation by the mitochondrial processing peptidase (PMPCA and PMPCB). This is m-AAA protease-interacting protein 1, mitochondrial from Homo sapiens (Human).